A 378-amino-acid chain; its full sequence is Chaperone protein DnaJ (378 aa).

A J domain is found at 5 to 69 (EYYDRLGVSK…QKRAAYDQYG (65 aa)). The CR-type zinc finger occupies 134–216 (GVEKEVSYNR…CHGTGHEKQA (83 aa)). Residues Cys147, Cys150, Cys164, Cys167, Cys190, Cys193, Cys204, and Cys207 each contribute to the Zn(2+) site. CXXCXGXG motif repeat units follow at residues 147-154 (CGTCLGSG), 164-171 (CRKCHGSG), 190-197 (CDICHGSG), and 204-211 (CQTCHGTG).

Belongs to the DnaJ family. As to quaternary structure, homodimer. The cofactor is Zn(2+).

The protein resides in the cytoplasm. Participates actively in the response to hyperosmotic and heat shock by preventing the aggregation of stress-denatured proteins and by disaggregating proteins, also in an autonomous, DnaK-independent fashion. Unfolded proteins bind initially to DnaJ; upon interaction with the DnaJ-bound protein, DnaK hydrolyzes its bound ATP, resulting in the formation of a stable complex. GrpE releases ADP from DnaK; ATP binding to DnaK triggers the release of the substrate protein, thus completing the reaction cycle. Several rounds of ATP-dependent interactions between DnaJ, DnaK and GrpE are required for fully efficient folding. Also involved, together with DnaK and GrpE, in the DNA replication of plasmids through activation of initiation proteins. In Streptococcus pyogenes serotype M6 (strain ATCC BAA-946 / MGAS10394), this protein is Chaperone protein DnaJ.